Reading from the N-terminus, the 317-residue chain is Protein translocase subunit SecF (317 aa).

Transmembrane regions (helical) follow at residues 11-31 (FYLL…LFGL), 135-155 (RSIV…AFAF), 166-186 (ICAI…FAIL), 197-217 (LFVT…IVVF), 244-266 (LVRS…FFGG), and 276-298 (LLIG…LVSW).

This sequence belongs to the SecD/SecF family. SecF subfamily. In terms of assembly, forms a complex with SecD. Part of the essential Sec protein translocation apparatus which comprises SecA, SecYEG and auxiliary proteins SecDF. Other proteins may also be involved.

The protein localises to the cell membrane. Its function is as follows. Part of the Sec protein translocase complex. Interacts with the SecYEG preprotein conducting channel. SecDF uses the proton motive force (PMF) to complete protein translocation after the ATP-dependent function of SecA. In Thermobaculum terrenum (strain ATCC BAA-798 / CCMEE 7001 / YNP1), this protein is Protein translocase subunit SecF.